Consider the following 125-residue polypeptide: Fumarate reductase subunit D (125 aa).

Transmembrane regions (helical) follow at residues 30 to 50 (FAMI…LGVI), 63 to 83 (FATS…PMWH), and 105 to 125 (IACY…IFMI).

Belongs to the FrdD family. As to quaternary structure, part of an enzyme complex containing four subunits: a flavoprotein (FrdA), an iron-sulfur protein (FrdB), and two hydrophobic anchor proteins (FrdC and FrdD).

It is found in the cell inner membrane. Its function is as follows. Anchors the catalytic components of the fumarate reductase complex to the cell membrane, binds quinones. The chain is Fumarate reductase subunit D from Vibrio campbellii (strain ATCC BAA-1116).